A 224-amino-acid chain; its full sequence is Thiamine-phosphate synthase (224 aa).

Residues 44 to 48 and N79 contribute to the 4-amino-2-methyl-5-(diphosphooxymethyl)pyrimidine site; that span reads QFREK. D80 and D99 together coordinate Mg(2+). S117 serves as a coordination point for 4-amino-2-methyl-5-(diphosphooxymethyl)pyrimidine. Position 143-145 (143-145) interacts with 2-[(2R,5Z)-2-carboxy-4-methylthiazol-5(2H)-ylidene]ethyl phosphate; it reads TET. K146 contributes to the 4-amino-2-methyl-5-(diphosphooxymethyl)pyrimidine binding site. 2-[(2R,5Z)-2-carboxy-4-methylthiazol-5(2H)-ylidene]ethyl phosphate is bound by residues G175 and 195 to 196; that span reads IS.

The protein belongs to the thiamine-phosphate synthase family. It depends on Mg(2+) as a cofactor.

It carries out the reaction 2-[(2R,5Z)-2-carboxy-4-methylthiazol-5(2H)-ylidene]ethyl phosphate + 4-amino-2-methyl-5-(diphosphooxymethyl)pyrimidine + 2 H(+) = thiamine phosphate + CO2 + diphosphate. It catalyses the reaction 2-(2-carboxy-4-methylthiazol-5-yl)ethyl phosphate + 4-amino-2-methyl-5-(diphosphooxymethyl)pyrimidine + 2 H(+) = thiamine phosphate + CO2 + diphosphate. The catalysed reaction is 4-methyl-5-(2-phosphooxyethyl)-thiazole + 4-amino-2-methyl-5-(diphosphooxymethyl)pyrimidine + H(+) = thiamine phosphate + diphosphate. It functions in the pathway cofactor biosynthesis; thiamine diphosphate biosynthesis; thiamine phosphate from 4-amino-2-methyl-5-diphosphomethylpyrimidine and 4-methyl-5-(2-phosphoethyl)-thiazole: step 1/1. Functionally, condenses 4-methyl-5-(beta-hydroxyethyl)thiazole monophosphate (THZ-P) and 2-methyl-4-amino-5-hydroxymethyl pyrimidine pyrophosphate (HMP-PP) to form thiamine monophosphate (TMP). This Bacillus licheniformis (strain ATCC 14580 / DSM 13 / JCM 2505 / CCUG 7422 / NBRC 12200 / NCIMB 9375 / NCTC 10341 / NRRL NRS-1264 / Gibson 46) protein is Thiamine-phosphate synthase.